The chain runs to 1098 residues: Transcription elongation regulator 1 (1098 aa).

Positions 1–15 are enriched in basic and acidic residues; the sequence is MAERGGDGGESERFN. A disordered region spans residues 1-105; that stretch reads MAERGGDGGE…RPPFMPPPMS (105 aa). At Ser11 the chain carries Phosphoserine. Arg20 is subject to Omega-N-methylarginine. Arg28, Arg30, Arg41, and Arg48 each carry asymmetric dimethylarginine. A compositionally biased stretch (pro residues) spans 32–105; the sequence is PAPPPNAVMR…RPPFMPPPMS (74 aa). The 34-residue stretch at 131-164 folds into the WW 1 domain; the sequence is PPTEEIWVENKTPDGKVYYYNARTRESAWTKPDG. Positions 184–244 form a coiled coil; sequence QAQAQAQAQA…AQAQAQAQVQ (61 aa). Residues 259-333 show a composition bias toward low complexity; the sequence is STPTTSSPAP…PTATPVQTVP (75 aa). The tract at residues 259 to 348 is disordered; sequence STPTTSSPAP…TLPPAVPHSV (90 aa). Pro residues predominate over residues 334–344; the sequence is QPHPQTLPPAV. The 34-residue stretch at 429-462 folds into the WW 2 domain; sequence ATAVSEWTEYKTADGKTYYYNNRTLESTWEKPQE. 2 stretches are compositionally biased toward basic and acidic residues: residues 469–481 and 496–506; these read LEEK…KEPS and EEPIKEIKEEP. The disordered stretch occupies residues 469–526; sequence LEEKIKEPIKEPSEEPLPMETEEEDPKEEPIKEIKEEPKEEEMTEEEKAAQKAKPVAT. Glycyl lysine isopeptide (Lys-Gly) (interchain with G-Cter in SUMO2) cross-links involve residues Lys503 and Lys507. One can recognise a WW 3 domain in the interval 528–561; sequence PIPGTPWCVVWTGDERVFFYNPTTRLSMWDRPDD. Positions 606–655 form a coiled coil; the sequence is AIKEEQELMEEINEDEPVKAKKRKRDDNKDIDSEKEAAMEAEIKAARERA. Lys608 is covalently cross-linked (Glycyl lysine isopeptide (Lys-Gly) (interchain with G-Cter in SUMO2)). A disordered region spans residues 615–640; the sequence is EEINEDEPVKAKKRKRDDNKDIDSEK. The Nuclear localization signal signature appears at 626–630; the sequence is KKRKR. Residues 630–640 show a composition bias toward basic and acidic residues; the sequence is RDDNKDIDSEK. Ser638 is subject to Phosphoserine. FF domains are found at residues 659-712, 725-779, and 791-846; these read LEAR…YVKT, IMQA…FVAA, and RGEK…YIEK. Position 834 is a phosphoserine (Ser834). Positions 844-906 form a coiled coil; it reads IEKIAKNLDS…EEAIQNFKAL (63 aa). Residues 870 to 895 are disordered; it reads REREREVQKARSEQTKEIDREREQHK. 3 consecutive FF domains span residues 896 to 952, 954 to 1010, and 1012 to 1077; these read REEA…HIEA, TKKK…YIRD, and YITA…YVDD. The residue at position 933 (Ser933) is a Phosphoserine. The segment at 1076–1098 is disordered; it reads DDLDRRGPPPPPTASEPTRRSTK.

In terms of assembly, binds formin. Interacts (via the second WW domain) with TREX1 (via proline-rich region). Binds RNA polymerase II, HD and SF1. In terms of tissue distribution, detected in brain neurons.

The protein localises to the nucleus. Its function is as follows. Transcription factor that binds RNA polymerase II and inhibits the elongation of transcripts from target promoters. Regulates transcription elongation in a TATA box-dependent manner. Necessary for TAT-dependent activation of the human immunodeficiency virus type 1 (HIV-1) promoter. The chain is Transcription elongation regulator 1 (TCERG1) from Homo sapiens (Human).